The sequence spans 739 residues: Catalase-peroxidase 2 (739 aa).

The signal sequence occupies residues 1–26 (MKKSTIPTLSALTLAMSLAFGGSVIA). A cross-link (tryptophyl-tyrosyl-methioninium (Trp-Tyr) (with M-253)) is located at residues 105-227 (WHSAGVYRIF…MGATQMGLIY (123 aa)). The active-site Proton acceptor is His-106. Residues 227–253 (YVNPEGPNGVPDPLASAKEIRDTFGRM) constitute a cross-link (tryptophyl-tyrosyl-methioninium (Tyr-Met) (with W-105)). His-268 is a heme b binding site.

It belongs to the peroxidase family. Peroxidase/catalase subfamily. As to quaternary structure, homodimer or homotetramer. Heme b serves as cofactor. In terms of processing, formation of the three residue Trp-Tyr-Met cross-link is important for the catalase, but not the peroxidase activity of the enzyme.

It catalyses the reaction H2O2 + AH2 = A + 2 H2O. It carries out the reaction 2 H2O2 = O2 + 2 H2O. Functionally, bifunctional enzyme with both catalase and broad-spectrum peroxidase activity. The polypeptide is Catalase-peroxidase 2 (Shewanella sp. (strain MR-7)).